A 339-amino-acid polypeptide reads, in one-letter code: MTAPSTPKPQRKKPKTATTAKPVVPRKEATLHPRNRHTGRYDFQALIKTTPELAQFVIINPYGKESIDFASPDAVRVFNRALLKSFYGIQHWDIPADYLCPPVPGRADYVHFLADLLASVNDGKIPRGSIVKVLDIGMGANCVYPLIGYMEYRWNFLGSEVDPIAVAAAKAIVQSNDLSKVIQLRQQTNPKQILLSLLEPGERFDLTMCNPPFHASMDEATKGSERKWRALGKADPKRKLPVLNFGGQSAELWCEGGEARFVTQLIAESAHFAHKVLWFSTLVSKASNLPAIETALKKAGVLESQVVEMSQGQKQSRFVAWTFQTKNEQQIWRQRWVRD.

The interval 1 to 26 (MTAPSTPKPQRKKPKTATTAKPVVPR) is disordered.

The protein belongs to the methyltransferase superfamily. METTL16/RlmF family.

It is found in the cytoplasm. The catalysed reaction is adenosine(1618) in 23S rRNA + S-adenosyl-L-methionine = N(6)-methyladenosine(1618) in 23S rRNA + S-adenosyl-L-homocysteine + H(+). Functionally, specifically methylates the adenine in position 1618 of 23S rRNA. The protein is Ribosomal RNA large subunit methyltransferase F of Pseudomonas fluorescens (strain SBW25).